Consider the following 690-residue polypeptide: Eukaryotic translation initiation factor 3 subunit B (690 aa).

The span at 1-11 (MAKKKSEEHSG) shows a compositional bias: basic and acidic residues. Residues 1–33 (MAKKKSEEHSGTDANDSDYQEEPNFDDPPGFVD) are disordered. Over residues 15-25 (NDSDYQEEPNF) the composition is skewed to acidic residues. The RRM domain maps to 57-141 (SVVVVDNIPK…HTFAVNLFTD (85 aa)). WD repeat units lie at residues 207 to 246 (TRERFTDTFVKWSPLGTYVVTFHKPGVAIWGGSSFQKIQK), 293 to 331 (DGMSVLSMFRWSHDDKFVARMGENSIHIYETPSFYLLDL), 334 to 369 (IKIPGIRGFSWSPTDNVIAYWVEEQNQIPARVTLME), 442 to 484 (EIRE…KPSL), and 530 to 575 (PDHF…IKRT). Residues 595–645 (EEKQKEIKKNLKKYYAAFEQKDRLRLTRASKELLEKRSQLRETFMEYRNKR) adopt a coiled-coil conformation.

It belongs to the eIF-3 subunit B family. Component of the eukaryotic translation initiation factor 3 (eIF-3) complex. The eIF-3 complex interacts with pix. Interacts with mxt.

It localises to the cytoplasm. RNA-binding component of the eukaryotic translation initiation factor 3 (eIF-3) complex, which is involved in protein synthesis of a specialized repertoire of mRNAs and, together with other initiation factors, stimulates binding of mRNA and methionyl-tRNAi to the 40S ribosome. The eIF-3 complex specifically targets and initiates translation of a subset of mRNAs involved in cell proliferation. The polypeptide is Eukaryotic translation initiation factor 3 subunit B (Drosophila melanogaster (Fruit fly)).